Here is a 200-residue protein sequence, read N- to C-terminus: GTP cyclohydrolase-2 (200 aa).

50-54 (RVHSE) lines the GTP pocket. Positions 55, 66, and 68 each coordinate Zn(2+). GTP contacts are provided by residues Q71, 93 to 95 (EGR), and T115. Catalysis depends on D127, which acts as the Proton acceptor. The active-site Nucleophile is the R129. GTP is bound by residues T150 and K155.

It belongs to the GTP cyclohydrolase II family. Requires Zn(2+) as cofactor.

It carries out the reaction GTP + 4 H2O = 2,5-diamino-6-hydroxy-4-(5-phosphoribosylamino)-pyrimidine + formate + 2 phosphate + 3 H(+). Its pathway is cofactor biosynthesis; riboflavin biosynthesis; 5-amino-6-(D-ribitylamino)uracil from GTP: step 1/4. Its function is as follows. Catalyzes the conversion of GTP to 2,5-diamino-6-ribosylamino-4(3H)-pyrimidinone 5'-phosphate (DARP), formate and pyrophosphate. This Acinetobacter baumannii (strain AB307-0294) protein is GTP cyclohydrolase-2.